The sequence spans 56 residues: uncharacterized protein (56 aa).

This is an uncharacterized protein from Haemophilus influenzae (strain ATCC 51907 / DSM 11121 / KW20 / Rd).